The sequence spans 65 residues: Large ribosomal subunit protein bL35 (65 aa).

It belongs to the bacterial ribosomal protein bL35 family.

The chain is Large ribosomal subunit protein bL35 from Acaryochloris marina (strain MBIC 11017).